Here is a 466-residue protein sequence, read N- to C-terminus: Soluble pyridine nucleotide transhydrogenase (466 aa).

36-45 (ERYNNVGGGC) serves as a coordination point for FAD.

Belongs to the class-I pyridine nucleotide-disulfide oxidoreductase family. It depends on FAD as a cofactor.

It localises to the cytoplasm. It catalyses the reaction NAD(+) + NADPH = NADH + NADP(+). Its function is as follows. Conversion of NADPH, generated by peripheral catabolic pathways, to NADH, which can enter the respiratory chain for energy generation. This Yersinia enterocolitica serotype O:8 / biotype 1B (strain NCTC 13174 / 8081) protein is Soluble pyridine nucleotide transhydrogenase.